Here is a 20-residue protein sequence, read N- to C-terminus: Unknown protein NF009 from 2D-PAGE (20 aa).

The interval alanine 1–proline 20 is disordered.

The protein is Unknown protein NF009 from 2D-PAGE of Naegleria fowleri (Brain eating amoeba).